The chain runs to 215 residues: Adenylyl-sulfate kinase (215 aa).

46-53 (GLSGAGKS) lines the ATP pocket. Ser-120 (phosphoserine intermediate) is an active-site residue.

This sequence belongs to the APS kinase family.

It carries out the reaction adenosine 5'-phosphosulfate + ATP = 3'-phosphoadenylyl sulfate + ADP + H(+). It functions in the pathway sulfur metabolism; hydrogen sulfide biosynthesis; sulfite from sulfate: step 2/3. In terms of biological role, catalyzes the synthesis of activated sulfate. This is Adenylyl-sulfate kinase (cysC) from Vibrio cholerae serotype O1 (strain ATCC 39315 / El Tor Inaba N16961).